The sequence spans 188 residues: uncharacterized protein (188 aa).

An L5-specific motif motif is present at residues 62 to 77 (ITGEKPLIKLNESTEK).

The protein localises to the mitochondrion. This is an uncharacterized protein from Dictyostelium discoideum (Social amoeba).